The following is a 180-amino-acid chain: Large ribosomal subunit protein uL5 (180 aa).

The protein belongs to the universal ribosomal protein uL5 family. As to quaternary structure, part of the 50S ribosomal subunit; part of the 5S rRNA/L5/L18/L25 subcomplex. Contacts the 5S rRNA and the P site tRNA. Forms a bridge to the 30S subunit in the 70S ribosome.

Functionally, this is one of the proteins that bind and probably mediate the attachment of the 5S RNA into the large ribosomal subunit, where it forms part of the central protuberance. In the 70S ribosome it contacts protein S13 of the 30S subunit (bridge B1b), connecting the 2 subunits; this bridge is implicated in subunit movement. Contacts the P site tRNA; the 5S rRNA and some of its associated proteins might help stabilize positioning of ribosome-bound tRNAs. This Lactiplantibacillus plantarum (strain ATCC BAA-793 / NCIMB 8826 / WCFS1) (Lactobacillus plantarum) protein is Large ribosomal subunit protein uL5.